The chain runs to 264 residues: Thymidylate synthase (264 aa).

Residue Arg-21 coordinates dUMP. His-51 is a binding site for (6R)-5,10-methylene-5,6,7,8-tetrahydrofolate. 126–127 (RR) is a dUMP binding site. Cys-146 serves as the catalytic Nucleophile. Residues 166-169 (RSAD), Asn-177, and 207-209 (HIY) each bind dUMP. Position 169 (Asp-169) interacts with (6R)-5,10-methylene-5,6,7,8-tetrahydrofolate. (6R)-5,10-methylene-5,6,7,8-tetrahydrofolate is bound at residue Ala-263.

This sequence belongs to the thymidylate synthase family. Bacterial-type ThyA subfamily. Homodimer.

Its subcellular location is the cytoplasm. The enzyme catalyses dUMP + (6R)-5,10-methylene-5,6,7,8-tetrahydrofolate = 7,8-dihydrofolate + dTMP. It participates in pyrimidine metabolism; dTTP biosynthesis. Its function is as follows. Catalyzes the reductive methylation of 2'-deoxyuridine-5'-monophosphate (dUMP) to 2'-deoxythymidine-5'-monophosphate (dTMP) while utilizing 5,10-methylenetetrahydrofolate (mTHF) as the methyl donor and reductant in the reaction, yielding dihydrofolate (DHF) as a by-product. This enzymatic reaction provides an intracellular de novo source of dTMP, an essential precursor for DNA biosynthesis. The sequence is that of Thymidylate synthase from Bacteroides fragilis (strain ATCC 25285 / DSM 2151 / CCUG 4856 / JCM 11019 / LMG 10263 / NCTC 9343 / Onslow / VPI 2553 / EN-2).